Consider the following 440-residue polypeptide: C-terminal-binding protein 1 (440 aa).

Residues 1 to 70 (MGSSHLLNKG…EIHEKVLNEA (70 aa)) are interaction with GLIS2 1. Residues Ser-100, 180 to 185 (IGLGRV), Asp-204, 237 to 243 (CGLNEHN), 264 to 266 (TAR), and Asp-290 contribute to the NAD(+) site. Arg-266 is a catalytic residue. Residues 288 to 360 (ALDVHESEPF…VNKDHLTAAT (73 aa)) are interaction with GLIS2 2. The active site involves Glu-295. At Ser-300 the chain carries Phosphoserine. The active-site Proton donor is the His-315. 315–318 (HAAW) provides a ligand contact to NAD(+). The tract at residues 408 to 440 (SHGLPPVAHPPHAPSPGQTVKPEADRDHASDQL) is disordered. Ser-422 bears the Phosphoserine; by HIPK2 mark. Lys-428 participates in a covalent cross-link: Glycyl lysine isopeptide (Lys-Gly) (interchain with G-Cter in SUMO). Residues 429–440 (PEADRDHASDQL) show a composition bias toward basic and acidic residues.

This sequence belongs to the D-isomer specific 2-hydroxyacid dehydrogenase family. Homo- or heterodimer. Heterodimer with CTBP2. Interacts with PRDM16; the interaction represses white adipose tissue (WAT)-specific genes expression. Interacts with GLIS2, FOXP2, HDAC4, HDAC5, HDAC9 and ZNF217. Interacts with ELK3 (via its PXDLS motif). Interacts with RBBP8 (via its PXDLS motif); the interaction is disrupted by binding to adenovirus E1A. Interacts with FOXP1, HIPK2, PNN, NRIP1, MECOM, ZFHX1B and WIZ. Interacts with ZNF366 (via PXDLS motif). Interaction with SATB1 (non-acetylated form); the interaction stabilizes its attachment to DNA and promotes transcription repression. Interacts with BCL6; the interaction is required for BCL6 transcriptional autoinhibition and inhibition of some BCL6 target genes. Interacts with IKZF4. Interacts with MCRIP1 (unphosphorylated form, via the PXDLS motif); competitively inhibiting CTBP-ZEB1 interaction. Interacts with Bassoon/BSN; this interaction targets and anchors CTBP1 to presynapses. Interacts with SIMC1. As to quaternary structure, (Microbial infection) Interacts with Epstein-Barr virus EBNA3. Interacts with Epstein-Barr virus EBNA6; this interaction leads to gene repression, but also seems to interfere with the repressive function of CtBP pre-bound to DNA, leading to EBNA6 mediated up-regulation of many cellular genes. In terms of assembly, (Microbial infection) Interacts with adenovirus E1A protein (via its C-terminus); the interaction disrupts the interaction of CTBP1 with RBBP8. (Microbial infection) Interacts with human adenovirus 5 E1A protein; this interaction seems to potentiate viral replication. It depends on NAD(+) as a cofactor. The level of phosphorylation appears to be regulated during the cell cycle. Phosphorylation by HIPK2 on Ser-422 induces proteasomal degradation. Post-translationally, ADP-ribosylated; when cells are exposed to brefeldin A. In terms of processing, sumoylation on Lys-428 is promoted by the E3 SUMO-protein ligase CBX4. Expressed in germinal center B-cells.

It localises to the cytoplasm. The protein resides in the nucleus. Its function is as follows. Corepressor targeting diverse transcription regulators such as GLIS2 or BCL6. Has dehydrogenase activity. Involved in controlling the equilibrium between tubular and stacked structures in the Golgi complex. Functions in brown adipose tissue (BAT) differentiation. This is C-terminal-binding protein 1 (CTBP1) from Homo sapiens (Human).